We begin with the raw amino-acid sequence, 144 residues long: MKETQEELRQRIGHTAYQVTQNSATEHAFTGKYDDFFEEGIYVDIVSGEVLFSSLDKFQSGCGWPAFSKPIENRMVTNHQDHSHGMHRIEVRSRQADSHLGHVFNDGPVDAGGLRYCINSAALDFIPYDQMAKRGYGDYLSLFD.

The MsrB domain maps to 5-128 (QEELRQRIGH…NSAALDFIPY (124 aa)). Catalysis depends on C117, which acts as the Nucleophile.

It belongs to the MsrB Met sulfoxide reductase family.

It carries out the reaction L-methionyl-[protein] + [thioredoxin]-disulfide + H2O = L-methionyl-(R)-S-oxide-[protein] + [thioredoxin]-dithiol. In Streptococcus agalactiae serotype Ia (strain ATCC 27591 / A909 / CDC SS700), this protein is Peptide methionine sulfoxide reductase MsrB.